Here is a 651-residue protein sequence, read N- to C-terminus: Probable potassium transport system protein Kup (651 aa).

12 helical membrane passes run 30-50, 71-91, 124-144, 158-178, 190-210, 233-253, 268-288, 310-330, 358-378, 387-407, 413-433, and 437-457; these read LALA…LYSL, IISM…VIFV, LLLG…TPAI, PDAE…LFIV, FGPV…PWII, AMAF…EALY, WFGL…AMIL, LVTI…SGAF, IYIP…ILIF, AYGL…LVLA, WPMW…LSIF, and LLKI…VVII.

It belongs to the HAK/KUP transporter (TC 2.A.72) family.

The protein localises to the cell membrane. The catalysed reaction is K(+)(in) + H(+)(in) = K(+)(out) + H(+)(out). Transport of potassium into the cell. Likely operates as a K(+):H(+) symporter. The polypeptide is Probable potassium transport system protein Kup (Cutibacterium acnes (strain DSM 16379 / KPA171202) (Propionibacterium acnes)).